A 69-amino-acid polypeptide reads, in one-letter code: Conotoxin reg3f (69 aa).

The first 20 residues, 1 to 20 (MMSKLGVLLTICLLLFPLSA), serve as a signal peptide directing secretion. Residues 21-52 (LPLDGDQPADQPAERMQDISPEQNPLFHPDKR) constitute a propeptide that is removed on maturation. 3 disulfide bridges follow: Cys-54–Cys-68, Cys-55–Cys-66, and Cys-60–Cys-69. Cys-69 carries the post-translational modification Cysteine amide.

As to expression, expressed by the venom duct.

The protein resides in the secreted. The protein is Conotoxin reg3f of Conus regius (Crown cone).